The sequence spans 1669 residues: Formin-like protein 12 (1669 aa).

Positions R5 to L193 constitute a Phosphatase tensin-type domain. C126 functions as the Phosphocysteine intermediate in the catalytic mechanism. In terms of domain architecture, C2 tensin-type spans P199–F338. Disordered stretches follow at residues Q688–E709, D1025–L1240, and I1631–K1669. Residues L1036–H1050 are compositionally biased toward basic and acidic residues. Composition is skewed to pro residues over residues P1060–Q1069, A1098–I1127, P1136–R1190, and P1198–P1230. The FH2 domain maps to N1247–A1646.

The protein belongs to the formin-like family. Class-II subfamily.

This Oryza sativa subsp. japonica (Rice) protein is Formin-like protein 12 (FH12).